A 428-amino-acid polypeptide reads, in one-letter code: tRNA(Ile)-lysidine synthase (428 aa).

An ATP-binding site is contributed by 25–30; that stretch reads SGGIDS.

Belongs to the tRNA(Ile)-lysidine synthase family.

Its subcellular location is the cytoplasm. The catalysed reaction is cytidine(34) in tRNA(Ile2) + L-lysine + ATP = lysidine(34) in tRNA(Ile2) + AMP + diphosphate + H(+). Its function is as follows. Ligates lysine onto the cytidine present at position 34 of the AUA codon-specific tRNA(Ile) that contains the anticodon CAU, in an ATP-dependent manner. Cytidine is converted to lysidine, thus changing the amino acid specificity of the tRNA from methionine to isoleucine. The protein is tRNA(Ile)-lysidine synthase of Haemophilus ducreyi (strain 35000HP / ATCC 700724).